A 349-amino-acid chain; its full sequence is Thioredoxin reductase, mitochondrial (349 aa).

Residues 1–30 (MLLVRNSTLGRLSSLRGFFRNINESNIFYR) constitute a mitochondrion transit peptide. Residues 41-44 (SGPA), 70-71 (IA), glutamine 75, asparagine 84, valine 117, cysteine 175, aspartate 318, and 325-327 (RQA) each bind FAD. Residues cysteine 172 and cysteine 175 are joined by a disulfide bond.

The protein belongs to the class-II pyridine nucleotide-disulfide oxidoreductase family. As to quaternary structure, homodimer. FAD serves as cofactor.

The protein resides in the mitochondrion. It carries out the reaction [thioredoxin]-dithiol + NADP(+) = [thioredoxin]-disulfide + NADPH + H(+). This is Thioredoxin reductase, mitochondrial (TRR1) from Kluyveromyces lactis (strain ATCC 8585 / CBS 2359 / DSM 70799 / NBRC 1267 / NRRL Y-1140 / WM37) (Yeast).